A 390-amino-acid polypeptide reads, in one-letter code: Scoulerine-9-O-methyltransferase 1 (390 aa).

A substrate-binding site is contributed by Glu-153. Residues Met-207, Ser-211, Gly-235, Asp-258, 278-279 (DM), and Lys-292 each bind S-adenosyl-L-methionine. The active-site Proton acceptor is His-296. A substrate-binding site is contributed by 296–297 (HD).

Belongs to the class I-like SAM-binding methyltransferase superfamily. Cation-independent O-methyltransferase family. COMT subfamily. In terms of assembly, homodimer. In terms of tissue distribution, highly expressed in capsules. Expressed is stems. Expressed at low levels in roots.

It carries out the reaction (S)-scoulerine + S-adenosyl-L-methionine = (S)-tetrahydrocolumbamine + S-adenosyl-L-homocysteine + H(+). The enzyme catalyses (S)-tetrahydrocolumbamine + S-adenosyl-L-methionine = (S)-tetrahydropalmatine + S-adenosyl-L-homocysteine + H(+). It catalyses the reaction (S)-norreticuline + S-adenosyl-L-methionine = (S)-norcodamine + S-adenosyl-L-homocysteine + H(+). The catalysed reaction is (S)-reticuline + S-adenosyl-L-methionine = (S)-codamine + S-adenosyl-L-homocysteine + H(+). The protein operates within alkaloid biosynthesis. In terms of biological role, methyltransferase involved in the biosynthesis of the benzylisoquinoline alkaloid noscapine. Catalyzes the conversion of (S)-scoulerine to (S)-tetrahydrocolumbamine. Can convert (S)-tetrahydrocolumbamine to tetrahydropalmatine. Can convert (S)-norreticuline to (S)-norcodamine. Can convert (S)-reticuline to (S)-codamine. Substrate preference is (S)-scoulerine &gt; (S)-tetrahydrocolumbamine &gt; (S)-norreticuline &gt; (S)-reticuline. This Papaver somniferum (Opium poppy) protein is Scoulerine-9-O-methyltransferase 1.